Consider the following 408-residue polypeptide: S100P-binding protein (408 aa).

Disordered regions lie at residues 1–111 (MMCS…AETP), 162–234 (KDET…SENP), and 271–291 (VSTS…MKGH). The span at 28 to 59 (SLDEDGLDDSLLELSEGEEDDGDVNYTEEEID) shows a compositional bias: acidic residues. Basic and acidic residues-rich tracts occupy residues 77–86 (DGGHVEKGER) and 162–185 (KDET…REDG). S187 carries the post-translational modification Phosphoserine. The span at 188-234 (PNESKLCTESEGISPNNSAWNGPQLSSSNNNFQQTVSDKNMPDSENP) shows a compositional bias: polar residues. Basic and acidic residues predominate over residues 280–291 (VLNKDSGKMKGH).

In terms of assembly, interacts with S100P. In terms of tissue distribution, expressed in brain, spleen, and lung. Not detected in pancreas or liver. In pancreas, expressed predominantly in islet cells and to a lesser extent in acinar cells, but not expressed in ductal cells. Up-regulated in various pancreatic ductal adenocarcinomas and pancreatic intraepithelial neoplasias. Detected in pancreatic ductal adenocarcinoma cells (at protein level). Not detected in non-neoplastic ductal epithelium (at protein level).

It is found in the nucleus. In Homo sapiens (Human), this protein is S100P-binding protein.